The sequence spans 37 residues: Large ribosomal subunit protein bL36c (37 aa).

The protein belongs to the bacterial ribosomal protein bL36 family.

The protein resides in the plastid. Its subcellular location is the chloroplast. The protein is Large ribosomal subunit protein bL36c of Coffea arabica (Arabian coffee).